Here is a 702-residue protein sequence, read N- to C-terminus: Polyribonucleotide nucleotidyltransferase (702 aa).

Mg(2+) is bound by residues D485 and D491. Positions 552–611 (PRITTLKINPEKIRDVIGKGGATIRALTEETGTTIELEDDGTVKIASANGEATKEAIRRI) constitute a KH domain. Residues 621–689 (GTVYNGKVVR…RQGRVRLSMK (69 aa)) form the S1 motif domain.

It belongs to the polyribonucleotide nucleotidyltransferase family. As to quaternary structure, component of the RNA degradosome, which is a multiprotein complex involved in RNA processing and mRNA degradation. Mg(2+) serves as cofactor.

It localises to the cytoplasm. The enzyme catalyses RNA(n+1) + phosphate = RNA(n) + a ribonucleoside 5'-diphosphate. Its function is as follows. Involved in mRNA degradation. Catalyzes the phosphorolysis of single-stranded polyribonucleotides processively in the 3'- to 5'-direction. This chain is Polyribonucleotide nucleotidyltransferase, found in Shewanella woodyi (strain ATCC 51908 / MS32).